The chain runs to 122 residues: Mth938 domain-containing protein (122 aa).

Positions 6–122 are MTH138-like domain; it reads IASLSWGQMK…RVGGVFHSTC (117 aa).

Belongs to the AAMDC family.

The protein localises to the cytoplasm. Its function is as follows. May play a role in preadipocyte differentiation and adipogenesis. The chain is Mth938 domain-containing protein (AAMDC) from Homo sapiens (Human).